The chain runs to 100 residues: Small cysteine and glycine repeat-containing protein 3 (100 aa).

Residues 4–82 form a 13 X 2 AA repeats of CG region; sequence CGCGSCGGCG…RRTCRSCGCG (79 aa).

This sequence belongs to the KRTAP type 28 family.

Its function is as follows. In the hair cortex, hair keratin intermediate filaments are embedded in an interfilamentous matrix, consisting of hair keratin-associated proteins (KRTAP), which are essential for the formation of a rigid and resistant hair shaft through their extensive disulfide bond cross-linking with abundant cysteine residues of hair keratins. The matrix proteins include the high-sulfur and high-glycine-tyrosine keratins. This Homo sapiens (Human) protein is Small cysteine and glycine repeat-containing protein 3.